Here is a 224-residue protein sequence, read N- to C-terminus: Prothoracicotropic hormone (224 aa).

An N-terminal signal peptide occupies residues 1 to 29; sequence MITRPIILVILCYAILMIVQSFVPKAVAL. Cystine bridges form between C132-C169, C155-C211, and C163-C213. N156 carries an N-linked (GlcNAc...) asparagine glycan.

Homodimer; disulfide-linked. As to expression, PTTH is synthesized by two dorsolateral neurosecretory cells of the Bombyx brain.

Functionally, PTTH is a brain secretory polypeptide of insects which stimulates the prothoracic glands to produce and release ecdysone, the steroid essential to insect development. Peptides P2K and P6K are presumed to be cleaved post-translationally and may play some unknown physiologically or developmentally important functions. This is Prothoracicotropic hormone from Bombyx mori (Silk moth).